The following is a 1422-amino-acid chain: MATLACRVQFLDDTDPFNSTNFPEPSRPPLFTFREDLALGTQLAGVHRLLQAPHKLDDCTLQLSHNGAYLDLEATLAEQRDELEGFQDDAGRGKKHSIILRTQLSVRVHACIEKLYNSSGRDLRRALFSLKQIFQDDKDLVHEFVVAEGLTCLIKVGAEADQNYQNYILRALGQIMLYVDGMNGVINRNETIQWLYTLIGSKFRLVVKTALKLLLVFVEYSESNAPLLIQAVTAVDTKRGVKPWSNIMEILEEKDGVDTELLVYAMTLVNKTLSGLPDQDTFYDVVDCLEELGIAAVSQRHLNKKGTDLDLVEQLNIYEVALRHEDGDETTEPPPSGCRDRRRASVCSSGGGEHRGLDRRRSRRHSVQSIKSTLSAPTSPCSQSAPSFKPNQVRDLREKYSNFGNNSYHSSRPSSGSSVPTTPTSSVSPPQEARLERSSPSGLLTSSFRQHQESLAAERERRRQEREERLQRIEREERNKFRYKYLEQLAAEEHEKELRSRSVSRGRADLSLDLTSPAAPACLAPLSHSPSSSDSQEALTVSASSPGTPHHPQASAGDPEPESEAEPEAEAGAGQVADEAGQDIASAHEGAETEVEQALEQEPEERASLSEKERQNEGVNERDNCSASSVSSSSSTLEREEKEDKLSRDRTTGLWPAGVQDAGVNGQCGDILTNKRFMLDMLYAHNRKSPDDEEKGDGEAGRTQQEAEAVASLATRISTLQANSQTQDESVRRVDVGCLDNRGSVKAFAEKFNSGDLGRGSISPDAEPNDKVPETAPVQPKTESDYIWDQLMANPRELRIQDMDFTDLGEEDDIDVLDVDLGHREAPGPPPPPPPTFLGLPPPPPPPLLDSIPPPPVPGNLLVPPPPVFNAPQGLGWSQVPRGQPTFTKKKKTIRLFWNEVRPFDWPCKNNRRCREFLWSKLEPIKVDTSRLEHLFESKSKELSVSKKTAADGKRQEIIVLDSKRSNAINIGLTVLPPPRTIKIAILNFDEYALNKEGIEKILTMIPTDEEKQKIQEAQLANPEIPLGSAEQFLLTLSSISELSARLHLWAFKMDYETTEKEVAEPLLDLKEGIDQLENNKTLGFILSTLLAIGNFLNGTNAKAFELSYLEKVPEVKDTVHKQSLLHHVCTMVVENFPDSSDLYSEIGAITRSAKVDFDQLQDNLCQMERRCKASWDHLKAIAKHEMKPVLKQRMSEFLKDCAERIIILKIVHRRIINRFHSFLLFMGHPPYAIREVNINKFCRIISEFALEYRTTRERVLQQKQKRANHRERNKTRGKMITDSGKFSGSSPAPPSQPQGLSYAEDAAEHENMKAVLKTSSPSVEDATPALGVRTRSRASRGSTSSWTMGTDDSPNVTDDAADEIMDRIVKSATQVPSQRVVPRERKRSRANRKSLRRTLKSGLTPEEARALGLVGTSELQL.

The GBD/FH3 domain maps to 18–411; sequence NSTNFPEPSR…NFGNNSYHSS (394 aa). Disordered regions lie at residues 323-464, 521-666, 687-708, 754-781, 821-849, 1262-1305, 1320-1357, and 1374-1410; these read RHED…RRRQ, ACLA…GVNG, RKSPDDEEKGDGEAGRTQQEAE, SGDLGRGSISPDAEPNDKVPETAPVQPK, LGHREAPGPPPPPPPTFLGLPPPPPPPLL, QQKQ…SYAE, SSPSVEDATPALGVRTRSRASRGSTSSWTMGTDDSPNV, and TQVPSQRVVPRERKRSRANRKSLRRTLKSGLTPEEAR. A Phosphoserine modification is found at Ser-345. Residues 357 to 366 show a composition bias toward basic residues; the sequence is LDRRRSRRHS. Residues 367–390 are compositionally biased toward polar residues; sequence VQSIKSTLSAPTSPCSQSAPSFKP. Ser-375 carries the phosphoserine modification. Residues 410-430 are compositionally biased toward low complexity; it reads SSRPSSGSSVPTTPTSSVSPP. Residues 438-449 show a composition bias toward polar residues; the sequence is SSPSGLLTSSFR. Residues 448–480 are a coiled coil; that stretch reads FRQHQESLAAERERRRQEREERLQRIEREERNK. A compositionally biased stretch (basic and acidic residues) spans 450-464; it reads QHQESLAAERERRRQ. Residues 521–535 show a composition bias toward low complexity; sequence ACLAPLSHSPSSSDS. The span at 536 to 547 shows a compositional bias: polar residues; it reads QEALTVSASSPG. Acidic residues-rich tracts occupy residues 559–569 and 592–603; these read PEPESEAEPEA and ETEVEQALEQEP. Basic and acidic residues predominate over residues 604-624; sequence EERASLSEKERQNEGVNERDN. The segment covering 626 to 635 has biased composition (low complexity); the sequence is SASSVSSSSS. Basic and acidic residues predominate over residues 637–651; sequence LEREEKEDKLSRDRT. Ser-763 is subject to Phosphoserine. Thr-775 is subject to Phosphothreonine. Pro residues predominate over residues 827-849; it reads PGPPPPPPPTFLGLPPPPPPPLL. One can recognise an FH1 domain in the interval 827 to 858; the sequence is PGPPPPPPPTFLGLPPPPPPPLLDSIPPPPVP. An FH2 domain is found at 883 to 1279; it reads GQPTFTKKKK…HRERNKTRGK (397 aa). Positions 1264–1278 are enriched in basic residues; that stretch reads KQKRANHRERNKTRG. The DAD domain maps to 1359 to 1391; sequence DDAADEIMDRIVKSATQVPSQRVVPRERKRSRA. Residues 1385–1400 show a composition bias toward basic residues; sequence ERKRSRANRKSLRRTL.

The protein belongs to the formin homology family. As to quaternary structure, interacts with nestin/NES-based interfilament (IF). Interacts with SQSTM1; isoform 4 threonine phosphorylation disrupts SQSTM1-binding. In terms of processing, phosphorylated on Thr-1474 and Thr-1476 by CK2. As to expression, expressed in the heart, kidney and brain. May be down-regulated in various types of heart diseases, including idiopathic dilated, ventricular dilated, familial dilated and perinatal dilated cardiomyopathies, as well as ischemic heart disease (at protein level).

It localises to the cytoplasm. The protein resides in the cytoskeleton. The protein localises to the myofibril. Its subcellular location is the sarcomere. It is found in the z line. Functionally, actin-organizing protein that may cause stress fiber formation together with cell elongation. Isoform 4 may play a role in actin filament polymerization in cardiomyocytes. The protein is FH1/FH2 domain-containing protein 3 (FHOD3) of Homo sapiens (Human).